A 512-amino-acid chain; its full sequence is Respiratory nitrate reductase 1 beta chain (512 aa).

3 4Fe-4S ferredoxin-type domains span residues 7-35 (VGMVLNLDKCIGCHTCSVTCKNVWTSREG), 175-206 (TFMMYLPRLCEHCLNPACVATCPSGAIYKREE), and 208-237 (GIVLIDQDKCRGWRMCITGCPYKKIYFNWK). Residues Cys-16, Cys-19, Cys-22, Cys-26, Cys-184, Cys-187, and Cys-192 each coordinate [4Fe-4S] cluster. [3Fe-4S] cluster contacts are provided by Cys-196, Cys-217, and Cys-223. Positions 227, 244, 247, 259, and 263 each coordinate [4Fe-4S] cluster.

In terms of assembly, dimer of heterotrimers each composed of an alpha, a beta and a gamma chain. Alpha and beta are catalytic chains; gamma chains are involved in binding the enzyme complex to the cytoplasmic membrane. Requires [4Fe-4S] cluster as cofactor. [3Fe-4S] cluster serves as cofactor.

The protein resides in the cell membrane. It catalyses the reaction nitrate + a quinol = a quinone + nitrite + H2O. Functionally, the nitrate reductase enzyme complex allows S.flexneri to use nitrate as an electron acceptor during anaerobic growth. The beta chain is an electron transfer unit containing four cysteine clusters involved in the formation of iron-sulfur centers. Electrons are transferred from the gamma chain to the molybdenum cofactor of the alpha subunit. The protein is Respiratory nitrate reductase 1 beta chain (narH) of Shigella flexneri.